Reading from the N-terminus, the 407-residue chain is Argininosuccinate synthase (407 aa).

ATP contacts are provided by residues 16-24 (AYSGGLDTS) and A44. Y96 and S101 together coordinate L-citrulline. G126 contributes to the ATP binding site. L-aspartate contacts are provided by T128, N132, and D133. N132 serves as a coordination point for L-citrulline. R136, S185, S194, E270, and Y282 together coordinate L-citrulline.

The protein belongs to the argininosuccinate synthase family. Type 1 subfamily. In terms of assembly, homotetramer.

Its subcellular location is the cytoplasm. It catalyses the reaction L-citrulline + L-aspartate + ATP = 2-(N(omega)-L-arginino)succinate + AMP + diphosphate + H(+). It functions in the pathway amino-acid biosynthesis; L-arginine biosynthesis; L-arginine from L-ornithine and carbamoyl phosphate: step 2/3. This is Argininosuccinate synthase from Shewanella sediminis (strain HAW-EB3).